The chain runs to 217 residues: tRNA (guanine-N(7)-)-methyltransferase (217 aa).

S-adenosyl-L-methionine-binding residues include Glu-43, Asp-68, Asn-101, and Asn-123. Position 127 (Lys-127) interacts with substrate. The tract at residues 129-134 (KHNKRR) is interaction with RNA. Substrate is bound by residues Asp-159 and 196 to 199 (TEYE).

Belongs to the class I-like SAM-binding methyltransferase superfamily. TrmB family.

The enzyme catalyses guanosine(46) in tRNA + S-adenosyl-L-methionine = N(7)-methylguanosine(46) in tRNA + S-adenosyl-L-homocysteine. Its pathway is tRNA modification; N(7)-methylguanine-tRNA biosynthesis. Catalyzes the formation of N(7)-methylguanine at position 46 (m7G46) in tRNA. The sequence is that of tRNA (guanine-N(7)-)-methyltransferase from Clostridium botulinum (strain Okra / Type B1).